A 308-amino-acid polypeptide reads, in one-letter code: tRNA pseudouridine synthase B (308 aa).

The Nucleophile role is filled by D49.

The protein belongs to the pseudouridine synthase TruB family. Type 1 subfamily.

The enzyme catalyses uridine(55) in tRNA = pseudouridine(55) in tRNA. Functionally, responsible for synthesis of pseudouridine from uracil-55 in the psi GC loop of transfer RNAs. The chain is tRNA pseudouridine synthase B from Corynebacterium jeikeium (strain K411).